We begin with the raw amino-acid sequence, 395 residues long: Flap endonuclease 1 (395 aa).

Residues 1–104 form an N-domain region; it reads MGIKHLYQVI…GELAKRFMRK (104 aa). Aspartate 34 contacts Mg(2+). Arginine 47 and arginine 70 together coordinate DNA. Mg(2+) is bound by residues aspartate 86, glutamate 158, glutamate 160, aspartate 179, and aspartate 181. Positions 122 to 253 are I-domain; it reads DVEKFSRRTV…NTALKLIRDH (132 aa). Glutamate 158 is a DNA binding site. DNA-binding residues include glycine 231 and aspartate 233. Residue aspartate 233 participates in Mg(2+) binding. Residues 341–349 form an interaction with PCNA region; it reads QQSRLEGFF. Residues 357–389 show a composition bias toward basic and acidic residues; the sequence is QEKATLKRKHEEKLELQKKKKKEEAKAKKEAKS. The disordered stretch occupies residues 357–395; it reads QEKATLKRKHEEKLELQKKKKKEEAKAKKEAKSKPRGAV.

It belongs to the XPG/RAD2 endonuclease family. FEN1 subfamily. Interacts with PCNA. Three molecules of FEN1 bind to one PCNA trimer with each molecule binding to one PCNA monomer. PCNA stimulates the nuclease activity without altering cleavage specificity. Requires Mg(2+) as cofactor. Post-translationally, phosphorylated. Phosphorylation upon DNA damage induces relocalization to the nuclear plasma.

Its subcellular location is the nucleus. The protein localises to the nucleolus. It localises to the nucleoplasm. The protein resides in the mitochondrion. In terms of biological role, structure-specific nuclease with 5'-flap endonuclease and 5'-3' exonuclease activities involved in DNA replication and repair. During DNA replication, cleaves the 5'-overhanging flap structure that is generated by displacement synthesis when DNA polymerase encounters the 5'-end of a downstream Okazaki fragment. It enters the flap from the 5'-end and then tracks to cleave the flap base, leaving a nick for ligation. Also involved in the long patch base excision repair (LP-BER) pathway, by cleaving within the apurinic/apyrimidinic (AP) site-terminated flap. Acts as a genome stabilization factor that prevents flaps from equilibrating into structures that lead to duplications and deletions. Also possesses 5'-3' exonuclease activity on nicked or gapped double-stranded DNA, and exhibits RNase H activity. Also involved in replication and repair of rDNA and in repairing mitochondrial DNA. This is Flap endonuclease 1 from Ajellomyces dermatitidis (strain ER-3 / ATCC MYA-2586) (Blastomyces dermatitidis).